We begin with the raw amino-acid sequence, 59 residues long: Large ribosomal subunit protein uL30 (59 aa).

It belongs to the universal ribosomal protein uL30 family. In terms of assembly, part of the 50S ribosomal subunit.

This Aeromonas hydrophila subsp. hydrophila (strain ATCC 7966 / DSM 30187 / BCRC 13018 / CCUG 14551 / JCM 1027 / KCTC 2358 / NCIMB 9240 / NCTC 8049) protein is Large ribosomal subunit protein uL30.